We begin with the raw amino-acid sequence, 99 residues long: Small ribosomal subunit protein bS6 (99 aa).

This sequence belongs to the bacterial ribosomal protein bS6 family.

Functionally, binds together with bS18 to 16S ribosomal RNA. The chain is Small ribosomal subunit protein bS6 from Lactiplantibacillus plantarum (strain ATCC BAA-793 / NCIMB 8826 / WCFS1) (Lactobacillus plantarum).